The sequence spans 324 residues: Corticotropin-releasing factor-binding protein (324 aa).

The signal sequence occupies residues 1–23; that stretch reads MAPTLKLQCHFILVCLLALRGES. 5 disulfides stabilise this stretch: cysteine 62–cysteine 83, cysteine 106–cysteine 143, cysteine 185–cysteine 207, cysteine 239–cysteine 266, and cysteine 279–cysteine 320. A glycan (N-linked (GlcNAc...) asparagine) is linked at asparagine 206.

It belongs to the CRF-binding protein family.

The protein resides in the secreted. Functionally, binds CRF and inactivates it. May prevent inappropriate pituitary-adrenal stimulation in pregnancy. This is Corticotropin-releasing factor-binding protein (CRHBP) from Ovis aries (Sheep).